Consider the following 721-residue polypeptide: Centlein (721 aa).

The stretch at 52 to 164 forms a coiled coil; sequence KNEKAISEQT…LRDENEEVVN (113 aa). 2 disordered regions span residues 156-180 and 259-288; these read RDENEEVVNPEEKEHCPTDKAKSEM and ETSQNIRPIENDGNQKETDQTEDSRAQQEV. 2 stretches are compositionally biased toward basic and acidic residues: residues 165–178 and 267–284; these read PEEKEHCPTDKAKS and IENDGNQKETDQTEDSRA. Coiled coils occupy residues 345–515 and 573–626; these read LLRE…EDLK and QSEQ…TQKS. A Phosphothreonine modification is found at threonine 658.

In terms of assembly, interacts with CEP250 and CEP68. Interacts with NEK2; the interaction leads to phosphorylation of CNTLN. Post-translationally, phosphorylated directly or indirectly by NEK2.

It is found in the cytoplasm. It localises to the cytoskeleton. Its subcellular location is the microtubule organizing center. The protein localises to the centrosome. The protein resides in the centriole. Required for centrosome cohesion and recruitment of CEP68 to centrosomes. The sequence is that of Centlein from Rattus norvegicus (Rat).